Here is a 349-residue protein sequence, read N- to C-terminus: Nicotinate-nucleotide--dimethylbenzimidazole phosphoribosyltransferase (349 aa).

Glu313 acts as the Proton acceptor in catalysis.

This sequence belongs to the CobT family.

The enzyme catalyses 5,6-dimethylbenzimidazole + nicotinate beta-D-ribonucleotide = alpha-ribazole 5'-phosphate + nicotinate + H(+). The protein operates within nucleoside biosynthesis; alpha-ribazole biosynthesis; alpha-ribazole from 5,6-dimethylbenzimidazole: step 1/2. Functionally, catalyzes the synthesis of alpha-ribazole-5'-phosphate from nicotinate mononucleotide (NAMN) and 5,6-dimethylbenzimidazole (DMB). This Mycobacterium avium (strain 104) protein is Nicotinate-nucleotide--dimethylbenzimidazole phosphoribosyltransferase.